A 180-amino-acid polypeptide reads, in one-letter code: MLKLLSEIGPVIAFFAGFFYGGGIQNATLYMLITSVICITLCYVIDKKVSKLSIISTTVLLVSGSITLISGDSMYIKIKPTILYVIFGIIFLMSGIRKNPFIKYALESIVRLKEESWIILSYRTAAFFFFMAVVNEIVWRNFSDETWVKFKVFGVIPVTFIFILLQLPLLLKNKLPDSKI.

Helical transmembrane passes span 25–45 (QNAT…CYVI), 49–69 (VSKL…ITLI), 76–96 (IKIK…MSGI), 118–138 (IILS…NEIV), and 150–170 (FKVF…LPLL).

This sequence belongs to the YciB family.

It is found in the cell inner membrane. Its function is as follows. Plays a role in cell envelope biogenesis, maintenance of cell envelope integrity and membrane homeostasis. This is Inner membrane-spanning protein YciB from Rickettsia felis (strain ATCC VR-1525 / URRWXCal2) (Rickettsia azadi).